Consider the following 106-residue polypeptide: Ribonuclease P protein component 4 (106 aa).

Residues C62, C65, C88, and C91 each coordinate Zn(2+).

Belongs to the eukaryotic/archaeal RNase P protein component 4 family. Consists of a catalytic RNA component and at least 4-5 protein subunits. It depends on Zn(2+) as a cofactor.

The protein resides in the cytoplasm. It carries out the reaction Endonucleolytic cleavage of RNA, removing 5'-extranucleotides from tRNA precursor.. Its function is as follows. Part of ribonuclease P, a protein complex that generates mature tRNA molecules by cleaving their 5'-ends. In Methanocorpusculum labreanum (strain ATCC 43576 / DSM 4855 / Z), this protein is Ribonuclease P protein component 4.